We begin with the raw amino-acid sequence, 832 residues long: Protein P (832 aa).

Positions 1–177 are terminal protein domain (TP); the sequence is MPLSYQHFRK…FCGSPYSWEQ (177 aa). The spacer stretch occupies residues 178 to 335; that stretch reads ELQHGAESFN…HCLSHLVNLL (158 aa). Polar residues-rich tracts occupy residues 205–220 and 251–263; these read SKHQ…QQGQ and SGHN…ESAS. A disordered region spans residues 205–263; sequence SKHQQSRLGLQPQQGQLAKGQRGRSGSVRSRAHSATRRSVGVEPSGSGHNNNSASESAS. The segment at 336-679 is polymerase/reverse transcriptase domain (RT); that stretch reads EDWGPCTEHG…YATLYPVARQ (344 aa). The Reverse transcriptase domain maps to 346–589; sequence KHHIRIPRTP…YSLNFMGYVI (244 aa). Residues Asp418, Asp540, and Asp541 each coordinate Mg(2+).

This sequence belongs to the hepadnaviridae P protein family.

The catalysed reaction is DNA(n) + a 2'-deoxyribonucleoside 5'-triphosphate = DNA(n+1) + diphosphate. It carries out the reaction Endonucleolytic cleavage to 5'-phosphomonoester.. With respect to regulation, activated by host HSP70 and HSP40 in vitro to be able to bind the epsilon loop of the pgRNA. Because deletion of the RNase H region renders the protein partly chaperone-independent, the chaperones may be needed indirectly to relieve occlusion of the RNA-binding site by this domain. Inhibited by several reverse-transcriptase inhibitors: Lamivudine, Adefovir and Entecavir. Functionally, multifunctional enzyme that converts the viral RNA genome into dsDNA in viral cytoplasmic capsids. This enzyme displays a DNA polymerase activity that can copy either DNA or RNA templates, and a ribonuclease H (RNase H) activity that cleaves the RNA strand of RNA-DNA heteroduplexes in a partially processive 3'- to 5'-endonucleasic mode. Neo-synthesized pregenomic RNA (pgRNA) are encapsidated together with the P protein, and reverse-transcribed inside the nucleocapsid. Initiation of reverse-transcription occurs first by binding the epsilon loop on the pgRNA genome, and is initiated by protein priming, thereby the 5'-end of (-)DNA is covalently linked to P protein. Partial (+)DNA is synthesized from the (-)DNA template and generates the relaxed circular DNA (RC-DNA) genome. After budding and infection, the RC-DNA migrates in the nucleus, and is converted into a plasmid-like covalently closed circular DNA (cccDNA). The activity of P protein does not seem to be necessary for cccDNA generation, and is presumably released from (+)DNA by host nuclear DNA repair machinery. The sequence is that of Protein P from Gorilla gorilla (western gorilla).